We begin with the raw amino-acid sequence, 201 residues long: Small ribosomal subunit protein uS4c (201 aa).

The tract at residues 17-44 (ALPGLTNKKPRNGSDLRNQSRSGKKSQY) is disordered. One can recognise an S4 RNA-binding domain in the interval 89-149 (MRLDNILFRL…DEQKSRALIQ (61 aa)).

This sequence belongs to the universal ribosomal protein uS4 family. As to quaternary structure, part of the 30S ribosomal subunit. Contacts protein S5. The interaction surface between S4 and S5 is involved in control of translational fidelity.

Its subcellular location is the plastid. The protein localises to the chloroplast. In terms of biological role, one of the primary rRNA binding proteins, it binds directly to 16S rRNA where it nucleates assembly of the body of the 30S subunit. Its function is as follows. With S5 and S12 plays an important role in translational accuracy. The sequence is that of Small ribosomal subunit protein uS4c (rps4) from Nicotiana sylvestris (Wood tobacco).